Consider the following 505-residue polypeptide: Deoxyguanosinetriphosphate triphosphohydrolase (505 aa).

Positions Arg-66–Cys-273 constitute an HD domain.

Belongs to the dGTPase family. Type 1 subfamily. In terms of assembly, homotetramer. Requires Mg(2+) as cofactor.

It catalyses the reaction dGTP + H2O = 2'-deoxyguanosine + triphosphate + H(+). In terms of biological role, dGTPase preferentially hydrolyzes dGTP over the other canonical NTPs. The protein is Deoxyguanosinetriphosphate triphosphohydrolase of Salmonella enteritidis PT4 (strain P125109).